The sequence spans 111 residues: Nitrogen regulatory protein P-II (111 aa).

An O-UMP-tyrosine modification is found at Tyr-50.

The protein belongs to the P(II) protein family. As to quaternary structure, homotrimer.

In terms of biological role, in nitrogen-limiting conditions, when the ratio of Gln to 2-ketoglutarate decreases, P-II is uridylylated to P-II-UMP. P-II-UMP allows the deadenylation of glutamine synthetase (GS), thus activating the enzyme. Conversely, in nitrogen excess P-II is deuridylated and promotes the adenylation of GS. P-II indirectly controls the transcription of the GS gene (glnA). P-II prevents NR-II-catalyzed conversion of NR-I to NR-I-phosphate, the transcriptional activator of glnA. When P-II is uridylylated to P-II-UMP, these events are reversed. The protein is Nitrogen regulatory protein P-II (glnB) of Rhizobium leguminosarum bv. viciae.